A 128-amino-acid chain; its full sequence is Glycine cleavage system H protein (128 aa).

Residues 23–105 (IGIVGITWFA…YGEGWILKLE (83 aa)) enclose the Lipoyl-binding domain. K64 is modified (N6-lipoyllysine).

Belongs to the GcvH family. The glycine cleavage system is composed of four proteins: P, T, L and H. (R)-lipoate serves as cofactor.

Functionally, the glycine cleavage system catalyzes the degradation of glycine. The H protein shuttles the methylamine group of glycine from the P protein to the T protein. This Symbiobacterium thermophilum (strain DSM 24528 / JCM 14929 / IAM 14863 / T) protein is Glycine cleavage system H protein.